A 337-amino-acid polypeptide reads, in one-letter code: tRNA N6-adenosine threonylcarbamoyltransferase (337 aa).

Fe cation-binding residues include His-111 and His-115. Substrate contacts are provided by residues 134-138, Asp-167, Gly-180, and Asn-272; that span reads LVSGG. Residue Asp-300 participates in Fe cation binding.

The protein belongs to the KAE1 / TsaD family. Fe(2+) serves as cofactor.

The protein resides in the cytoplasm. The enzyme catalyses L-threonylcarbamoyladenylate + adenosine(37) in tRNA = N(6)-L-threonylcarbamoyladenosine(37) in tRNA + AMP + H(+). Required for the formation of a threonylcarbamoyl group on adenosine at position 37 (t(6)A37) in tRNAs that read codons beginning with adenine. Is involved in the transfer of the threonylcarbamoyl moiety of threonylcarbamoyl-AMP (TC-AMP) to the N6 group of A37, together with TsaE and TsaB. TsaD likely plays a direct catalytic role in this reaction. The polypeptide is tRNA N6-adenosine threonylcarbamoyltransferase (Photorhabdus laumondii subsp. laumondii (strain DSM 15139 / CIP 105565 / TT01) (Photorhabdus luminescens subsp. laumondii)).